The following is a 176-amino-acid chain: DELTA-stichotoxin-She4a (176 aa).

Residues 2-11 (ELAGTIIDGA) form a plays an important role in the hemolytic activity region. The tract at residues 10–29 (GASLTFEVLDKVLGELGKVS) is N-terminal region. Phosphocholine-binding residues include S53, V86, S104, P106, Y132, Y136, and Y137. Residues 104–119 (SVPFDYNWYSNWWDVK) are trp-rich region, which is important for the binding to lipid membrane. The short motif at 142-144 (RGD) is the Cell attachment site element.

As to quaternary structure, octamer or nonamer in membranes. Monomer in the soluble state.

Its subcellular location is the secreted. It is found in the nematocyst. The protein localises to the target cell membrane. Its function is as follows. Pore-forming protein that forms cations-selective hydrophilic pores of around 1 nm and causes cardiac stimulation and cytolysis. Pore formation is a multi-step process that involves specific recognition of membrane sphingomyelin (but neither cholesterol nor phosphatidylcholine) using aromatic rich region and adjacent phosphocholine (POC) binding site, firm binding to the membrane (mainly driven by hydrophobic interactions) accompanied by the transfer of the N-terminal region to the lipid-water interface and finally pore formation after oligomerization of monomers. Cytolytic effects include red blood cells hemolysis, platelet aggregation and lysis, cytotoxic and cytostatic effects on fibroblasts. Lethality in mammals has been ascribed to severe vasospasm of coronary vessels, cardiac arrhythmia, and inotropic effects. In Stichodactyla helianthus (Sun anemone), this protein is DELTA-stichotoxin-She4a.